The chain runs to 399 residues: Pre-mycofactocin synthase (399 aa).

The 383-residue stretch at 4–386 (ARDIWFETVA…VPEDILVPEG (383 aa)) folds into the FMN hydroxy acid dehydrogenase domain. S111 and Q131 together coordinate FMN. An a 2-oxocarboxylate-binding site is contributed by Y133. T159 serves as a coordination point for FMN. R168 lines the a 2-oxocarboxylate pocket. K257 is a binding site for FMN. Catalysis depends on H281, which acts as the Proton acceptor. Residues 312–316 (DGGIR) and 335–336 (GR) each bind FMN.

Belongs to the FMN-dependent alpha-hydroxy acid dehydrogenase family. Requires FMN as cofactor.

The enzyme catalyses 3-amino-5-[(4-hydroxyphenyl)methyl]-4,4-dimethyl-2-pyrrolidin-2-one + O2 + H2O = pre-mycofactocin + H2O2 + NH4(+). In terms of biological role, involved in the biosynthesis of the enzyme cofactor mycofactocin (MFT). Catalyzes the oxidative deamination of AHDP (3-amino-5-[(4-hydroxyphenyl)methyl]-4,4-dimethyl-2-pyrrolidin-2-one), forming an alpha-keto amide moiety on the resulting molecule, which is called pre-mycofactocin (PMFT). This reaction occurs via a 5-[(4-hydroxyphenyl)methyl]-3-imino-4,4-dimethylpyrrolidin-2-one intermediate, which converts to PMFT. The alpha-keto amide moiety is the redox-active center for the redox activity of mycofactocin. Is required for the in vivo ethanol assimilation in M.smegmatis. In Mycolicibacterium smegmatis (strain ATCC 700084 / mc(2)155) (Mycobacterium smegmatis), this protein is Pre-mycofactocin synthase.